A 548-amino-acid polypeptide reads, in one-letter code: Glucose-6-phosphate isomerase (548 aa).

Glu-355 functions as the Proton donor in the catalytic mechanism. Residues His-386 and Lys-514 contribute to the active site.

It belongs to the GPI family.

The protein resides in the cytoplasm. It carries out the reaction alpha-D-glucose 6-phosphate = beta-D-fructose 6-phosphate. The protein operates within carbohydrate biosynthesis; gluconeogenesis. It participates in carbohydrate degradation; glycolysis; D-glyceraldehyde 3-phosphate and glycerone phosphate from D-glucose: step 2/4. Its function is as follows. Catalyzes the reversible isomerization of glucose-6-phosphate to fructose-6-phosphate. This is Glucose-6-phosphate isomerase from Yersinia pestis (strain Pestoides F).